A 31-amino-acid polypeptide reads, in one-letter code: Hemocyanin subunit 1 (31 aa).

This sequence belongs to the tyrosinase family. Hemocyanin subfamily. In terms of tissue distribution, hemolymph.

The protein localises to the secreted. The protein resides in the extracellular space. Its function is as follows. Hemocyanins are copper-containing oxygen carriers occurring freely dissolved in the hemolymph of many mollusks and arthropods. The chain is Hemocyanin subunit 1 from Homarus americanus (American lobster).